A 95-amino-acid chain; its full sequence is Co-chaperonin GroES (95 aa).

The protein belongs to the GroES chaperonin family. As to quaternary structure, heptamer of 7 subunits arranged in a ring. Interacts with the chaperonin GroEL.

It is found in the cytoplasm. Together with the chaperonin GroEL, plays an essential role in assisting protein folding. The GroEL-GroES system forms a nano-cage that allows encapsulation of the non-native substrate proteins and provides a physical environment optimized to promote and accelerate protein folding. GroES binds to the apical surface of the GroEL ring, thereby capping the opening of the GroEL channel. This chain is Co-chaperonin GroES, found in Methylocella silvestris (strain DSM 15510 / CIP 108128 / LMG 27833 / NCIMB 13906 / BL2).